A 129-amino-acid chain; its full sequence is MARDKTRIKRKERKNIATGVAHVNSSFNNTKILISDVQGNAISWSSAGTMGFKGSRKSTPYAAQMAAEDAGKKAQEHGVRTLEVEVQGPGSGRESALRALAAVGFNITAIRDVTPIAHNGCRPPKRRRV.

This sequence belongs to the universal ribosomal protein uS11 family. As to quaternary structure, part of the 30S ribosomal subunit. Interacts with proteins S7 and S18. Binds to IF-3.

In terms of biological role, located on the platform of the 30S subunit, it bridges several disparate RNA helices of the 16S rRNA. Forms part of the Shine-Dalgarno cleft in the 70S ribosome. In Paracoccus denitrificans (strain Pd 1222), this protein is Small ribosomal subunit protein uS11.